The following is a 932-amino-acid chain: PMS1 protein homolog 1 (932 aa).

A disordered region spans residues 465-493 (TQSENGNKDHIDESGENEEEAGLENSSEI). Residues 571 to 639 (IKKPMSASAL…RYNSQMKRAI (69 aa)) constitute a DNA-binding region (HMG box).

This sequence belongs to the DNA mismatch repair MutL/HexB family. As to quaternary structure, component of the DNA mismatch repair (MMR) complex composed at least of MSH2, MSH3, MSH6, PMS1 and MLH1. The MutL-beta complex is a heterodimer of PMS1 and MLH1. Interacts with MCM9.

The protein resides in the nucleus. Its function is as follows. Probably involved in the repair of mismatches in DNA. This chain is PMS1 protein homolog 1 (PMS1), found in Homo sapiens (Human).